The chain runs to 200 residues: MLRALNRLAARPETRPPTPLLLPVRGRKTRHDPPAKSKVGRVQTPPAVDPAEFFVLTERYRQYRETVRALRLEFTLEVRRKLHEARAGVLAERKAQQAITEHRELMAWNRDENRRMQELRIARLQLEAQAQEVQKAEAQAQRAQEEQAWVQLKEQEVLKLQEEAKNFITRENLEARIEEALDSPKSYNWAVTKEGQVVRN.

Residues 1 to 27 (MLRALNRLAARPETRPPTPLLLPVRGR) constitute a mitochondrion transit peptide. The interval 1–44 (MLRALNRLAARPETRPPTPLLLPVRGRKTRHDPPAKSKVGRVQT) is disordered. Lys-159 is subject to N6-acetyllysine.

This sequence belongs to the mitochondrion-specific ribosomal protein mS26 family. In terms of assembly, component of the mitochondrial ribosome small subunit (28S) which comprises a 12S rRNA and about 30 distinct proteins.

The protein resides in the mitochondrion. In Mus musculus (Mouse), this protein is Small ribosomal subunit protein mS26 (Mrps26).